The sequence spans 79 residues: Small ribosomal subunit protein bS16 (79 aa).

The protein belongs to the bacterial ribosomal protein bS16 family.

The polypeptide is Small ribosomal subunit protein bS16 (Nitratidesulfovibrio vulgaris (strain DSM 19637 / Miyazaki F) (Desulfovibrio vulgaris)).